The primary structure comprises 100 residues: Defensin-like protein 316 (100 aa).

The N-terminal stretch at 1–18 (MASHIICYIFCIIKLSCA) is a signal peptide. 3 disulfides stabilise this stretch: Cys21–Cys84, Cys43–Cys64, and Cys53–Cys76.

Belongs to the DEFL family.

The protein localises to the secreted. In Arabidopsis thaliana (Mouse-ear cress), this protein is Defensin-like protein 316.